A 275-amino-acid chain; its full sequence is MTKVEYKHTHIAAKKKLGQNFLLDRNIPRKIVRESGIKEGDRVVEIGPGFGALTTAILEVMPSFTAIEKDRELAKFNREEHPQIELIEDDFLKVPLEPLAAGGKLSVLGNIPYSITSPILFRLLDNRHLIASATLMIQHEVAQRIAAVPGTKEYGILAVQMQAFCDVKYLFKVGRAVFKPRPDVDSAVIKMVPKAVDPVKDSEGFRTFVRRVFHQRRKTLLNNLKEYYDTSGVPEPTLKLRAESLSVPALITLFTQLKLIARGDASGQLLLKRRR.

S-adenosyl-L-methionine is bound by residues Asn20, Leu22, Gly47, Glu68, Asp90, and Asn110.

Belongs to the class I-like SAM-binding methyltransferase superfamily. rRNA adenine N(6)-methyltransferase family. RsmA subfamily.

Its subcellular location is the cytoplasm. The enzyme catalyses adenosine(1518)/adenosine(1519) in 16S rRNA + 4 S-adenosyl-L-methionine = N(6)-dimethyladenosine(1518)/N(6)-dimethyladenosine(1519) in 16S rRNA + 4 S-adenosyl-L-homocysteine + 4 H(+). Its function is as follows. Specifically dimethylates two adjacent adenosines (A1518 and A1519) in the loop of a conserved hairpin near the 3'-end of 16S rRNA in the 30S particle. May play a critical role in biogenesis of 30S subunits. This is Ribosomal RNA small subunit methyltransferase A from Chlorobaculum tepidum (strain ATCC 49652 / DSM 12025 / NBRC 103806 / TLS) (Chlorobium tepidum).